A 182-amino-acid chain; its full sequence is UPF0397 protein VV2_1534 (182 aa).

A run of 5 helical transmembrane segments spans residues 8-28 (VVVI…MFGI), 41-61 (AVLA…VGFI), 72-92 (WGVW…IGLF), 110-130 (FSLF…CSAF), and 146-166 (QLTI…YFIL).

The protein belongs to the UPF0397 family.

The protein localises to the cell membrane. The sequence is that of UPF0397 protein VV2_1534 from Vibrio vulnificus (strain CMCP6).